A 239-amino-acid polypeptide reads, in one-letter code: Uridylate kinase (239 aa).

An ATP-binding site is contributed by 13 to 16; that stretch reads KLSG. A UMP-binding site is contributed by Gly55. Gly56 and Arg60 together coordinate ATP. UMP is bound by residues Asp75 and 136–143; that span reads TGNPFFTT. ATP contacts are provided by Thr163, Asn164, Tyr169, and Asp172.

Belongs to the UMP kinase family. In terms of assembly, homohexamer.

Its subcellular location is the cytoplasm. It carries out the reaction UMP + ATP = UDP + ADP. It participates in pyrimidine metabolism; CTP biosynthesis via de novo pathway; UDP from UMP (UMPK route): step 1/1. With respect to regulation, inhibited by UTP. Catalyzes the reversible phosphorylation of UMP to UDP. In Neisseria gonorrhoeae (strain ATCC 700825 / FA 1090), this protein is Uridylate kinase.